A 620-amino-acid chain; its full sequence is 1-deoxy-D-xylulose-5-phosphate synthase (620 aa).

Thiamine diphosphate-binding positions include His-80 and 121–123 (GHS). Residue Asp-152 participates in Mg(2+) binding. Residues 153–154 (GA), Asn-181, Tyr-288, and Glu-370 contribute to the thiamine diphosphate site. Asn-181 contributes to the Mg(2+) binding site.

It belongs to the transketolase family. DXPS subfamily. Homodimer. It depends on Mg(2+) as a cofactor. Thiamine diphosphate serves as cofactor.

The enzyme catalyses D-glyceraldehyde 3-phosphate + pyruvate + H(+) = 1-deoxy-D-xylulose 5-phosphate + CO2. It participates in metabolic intermediate biosynthesis; 1-deoxy-D-xylulose 5-phosphate biosynthesis; 1-deoxy-D-xylulose 5-phosphate from D-glyceraldehyde 3-phosphate and pyruvate: step 1/1. Its function is as follows. Catalyzes the acyloin condensation reaction between C atoms 2 and 3 of pyruvate and glyceraldehyde 3-phosphate to yield 1-deoxy-D-xylulose-5-phosphate (DXP). The chain is 1-deoxy-D-xylulose-5-phosphate synthase from Klebsiella pneumoniae (strain 342).